Consider the following 309-residue polypeptide: Manganese-dependent inorganic pyrophosphatase (309 aa).

Residues His-9, Asp-13, Asp-15, Asp-75, His-97, and Asp-149 each contribute to the Mn(2+) site.

Homodimer. Mn(2+) is required as a cofactor.

The protein resides in the cytoplasm. It carries out the reaction diphosphate + H2O = 2 phosphate + H(+). In Bacillus subtilis (strain 168), this protein is Manganese-dependent inorganic pyrophosphatase (ppaC).